A 175-amino-acid chain; its full sequence is Peptide deformylase 1 (175 aa).

The Fe cation site is built by C99 and H141. The active site involves E142. A Fe cation-binding site is contributed by H145.

Belongs to the polypeptide deformylase family. Fe(2+) is required as a cofactor.

The catalysed reaction is N-terminal N-formyl-L-methionyl-[peptide] + H2O = N-terminal L-methionyl-[peptide] + formate. Removes the formyl group from the N-terminal Met of newly synthesized proteins. Requires at least a dipeptide for an efficient rate of reaction. N-terminal L-methionine is a prerequisite for activity but the enzyme has broad specificity at other positions. In Rickettsia conorii (strain ATCC VR-613 / Malish 7), this protein is Peptide deformylase 1.